Here is a 494-residue protein sequence, read N- to C-terminus: Metalloprotease TIKI1 (494 aa).

Residues 1–25 form the signal peptide; it reads MTMMTMMMVSWSAFLQICWILMVRA. The Extracellular segment spans residues 26–467; that stretch reads NQFNPGEPSG…QEHERANHDR (442 aa). Residues asparagine 234 and asparagine 282 are each glycosylated (N-linked (GlcNAc...) asparagine). Residues 468-488 traverse the membrane as a helical segment; the sequence is TFSGSSSRTGPALSALAVCVQ. Topologically, residues 489-494 are cytoplasmic; that stretch reads MLRLLL.

The protein belongs to the TIKI family. Requires Mn(2+) as cofactor. Co(2+) serves as cofactor.

Its subcellular location is the cell membrane. Functionally, metalloprotease that acts as a negative regulator of the Wnt signaling pathway by mediating the cleavage of the N-terminal residues of a subset of Wnt proteins. Following cleavage, Wnt proteins become oxidized and form large disulfide-bond oligomers, leading to their inactivation. The polypeptide is Metalloprotease TIKI1 (trabd2a) (Danio rerio (Zebrafish)).